Consider the following 286-residue polypeptide: MDTILVFSLIITSYNVTKKELRDSSCQVEPLPDLFPKDVRSIRAELIREAQAEAKRPMFIQNQTVAILQCLGSGSKVKVNLVHSEKRQKVKHILKNLRVMTVPCRNSTAPPSCHLTPASKVQAGFLVTGKAFLPGVSQCKVYPVMGASSETYPSTTTSVTPGKKGEKTTKVDGFSSPLNQDTDENLEKRKKWSIVVKVLIAVTLFVSGIAITVFVIFEVPCPSRCQQVRELCQCQRLRRRPRKEDQQPGTAESQSDTQPKKVGQEAPNSSSPKKAVEITVVHQTYF.

The tract at residues 152–182 is disordered; that stretch reads YPSTTTSVTPGKKGEKTTKVDGFSSPLNQDT. Residues 198–218 form a helical membrane-spanning segment; it reads VLIAVTLFVSGIAITVFVIFE. Residues 239–278 form a disordered region; that stretch reads RRPRKEDQQPGTAESQSDTQPKKVGQEAPNSSSPKKAVEI. Over residues 247–257 the composition is skewed to polar residues; sequence QPGTAESQSDT.

Its subcellular location is the membrane. This is an uncharacterized protein from Bos taurus (Bovine).